Here is a 243-residue protein sequence, read N- to C-terminus: MSKQKKSEIINRFRKRFDTKMTELGFTYQNIDLYQQAFSHSSFINDFNMNRLDHNERLEFLGDAVLELTVSRYLFDKHPNLPEGNLTKMRATIVCEPSLVIFANKIGLNEMILLGKGEEKTGGRTRPSLISDVFEAFIGALYLDQGLDIVWKFAEKVIFPHVEQNELLGVVDFKTQFQEYVHQQNKGDVTYNLIKEEGPAHHRLFTSEVILQGEAIAEGKGKTKKESEQRAAESAYKQLKQIK.

Positions 10 to 146 constitute an RNase III domain; it reads INRFRKRFDT…FIGALYLDQG (137 aa). E59 provides a ligand contact to Mg(2+). The active site involves D63. Positions 132 and 135 each coordinate Mg(2+). E135 is a catalytic residue. A DRBM domain is found at 172–241; it reads DFKTQFQEYV…AESAYKQLKQ (70 aa). Basic and acidic residues predominate over residues 219–231; the sequence is GKGKTKKESEQRA. Residues 219–243 form a disordered region; the sequence is GKGKTKKESEQRAAESAYKQLKQIK.

It belongs to the ribonuclease III family. In terms of assembly, homodimer. The cofactor is Mg(2+).

It localises to the cytoplasm. The enzyme catalyses Endonucleolytic cleavage to 5'-phosphomonoester.. Its function is as follows. Digests double-stranded RNA. Involved in the processing of primary rRNA transcript to yield the immediate precursors to the large and small rRNAs (23S and 16S). Processes some mRNAs, and tRNAs when they are encoded in the rRNA operon. Processes pre-crRNA and tracrRNA of type II CRISPR loci if present in the organism. The sequence is that of Ribonuclease 3 from Staphylococcus aureus (strain bovine RF122 / ET3-1).